The chain runs to 135 residues: Peptide methionine sulfoxide reductase MsrB (135 aa).

The region spanning D13 to V135 is the MsrB domain. Zn(2+)-binding residues include C52, C55, C101, and C104. C124 acts as the Nucleophile in catalysis.

This sequence belongs to the MsrB Met sulfoxide reductase family. Zn(2+) serves as cofactor.

The enzyme catalyses L-methionyl-[protein] + [thioredoxin]-disulfide + H2O = L-methionyl-(R)-S-oxide-[protein] + [thioredoxin]-dithiol. The protein is Peptide methionine sulfoxide reductase MsrB of Agrobacterium fabrum (strain C58 / ATCC 33970) (Agrobacterium tumefaciens (strain C58)).